Reading from the N-terminus, the 650-residue chain is Methionine--tRNA ligase (650 aa).

Positions 11 to 21 (YYVNDIPHIGH) match the 'HIGH' region motif. Cys-126, Cys-129, Cys-147, and Cys-150 together coordinate Zn(2+). The 'KMSKS' region signature appears at 301–305 (KMSKS). Lys-304 serves as a coordination point for ATP. Residues 513–535 (EKTEKAGEASPEKNEKEKKDAKE) form a disordered region. A tRNA-binding domain is found at 549-650 (DFKKVEIKVG…REKIAGSLIS (102 aa)).

The protein belongs to the class-I aminoacyl-tRNA synthetase family. MetG type 2A subfamily. In terms of assembly, homodimer. Requires Zn(2+) as cofactor.

The protein localises to the cytoplasm. The enzyme catalyses tRNA(Met) + L-methionine + ATP = L-methionyl-tRNA(Met) + AMP + diphosphate. Its function is as follows. Is required not only for elongation of protein synthesis but also for the initiation of all mRNA translation through initiator tRNA(fMet) aminoacylation. This is Methionine--tRNA ligase (metG) from Helicobacter pylori (strain ATCC 700392 / 26695) (Campylobacter pylori).